Consider the following 374-residue polypeptide: MADFYQILGVSRDADANTLKSAYRKLARQYHPDVNKDPGAEDKFKEIGKAYEALADPETRARYDQFGEAGIGGAAGMPDMGDMGGFGDLFETFFNGFGGQSSQGGRSQRRGPQQGDDLRYDLNIDFKDAIFGQQREINIPHLETCEVCRGTGAKKGTGPTTCTTCGGSGQVRRATRTPFGNFTQVAECPTCNGVGQIISDPCTSCGGNGVKQVRKKLRINIPAGVDSGTKLRVSGEGNVGLKGGPPGDLYVFIKVKNDSNLKREGINIYSEISVSYLQAILGDTVDIITVDGKVNLKIPSGTQPNSTLSLENKGVPRLGNPVARGNHQVLVKVKLPTRITEDERNLLEDLASKYTEQNSSSNSGLFSRLFGKDS.

In terms of domain architecture, J spans 3–67 (DFYQILGVSR…ETRARYDQFG (65 aa)). Residues 99 to 118 (GQSSQGGRSQRRGPQQGDDL) form a disordered region. The span at 103–115 (QGGRSQRRGPQQG) shows a compositional bias: low complexity. Residues 132 to 214 (GQQREINIPH…CGGNGVKQVR (83 aa)) form a CR-type zinc finger. Positions 145, 148, 162, 165, 188, 191, 202, and 205 each coordinate Zn(2+). CXXCXGXG motif repeat units follow at residues 145–152 (CEVCRGTG), 162–169 (CTTCGGSG), 188–195 (CPTCNGVG), and 202–209 (CTSCGGNG).

Belongs to the DnaJ family. As to quaternary structure, homodimer. Zn(2+) is required as a cofactor.

The protein resides in the cytoplasm. In terms of biological role, participates actively in the response to hyperosmotic and heat shock by preventing the aggregation of stress-denatured proteins and by disaggregating proteins, also in an autonomous, DnaK-independent fashion. Unfolded proteins bind initially to DnaJ; upon interaction with the DnaJ-bound protein, DnaK hydrolyzes its bound ATP, resulting in the formation of a stable complex. GrpE releases ADP from DnaK; ATP binding to DnaK triggers the release of the substrate protein, thus completing the reaction cycle. Several rounds of ATP-dependent interactions between DnaJ, DnaK and GrpE are required for fully efficient folding. Also involved, together with DnaK and GrpE, in the DNA replication of plasmids through activation of initiation proteins. The protein is Chaperone protein DnaJ of Prochlorococcus marinus subsp. pastoris (strain CCMP1986 / NIES-2087 / MED4).